A 307-amino-acid polypeptide reads, in one-letter code: Oxygen-dependent coproporphyrinogen-III oxidase (307 aa).

Ser-99 serves as a coordination point for substrate. A divalent metal cation is bound by residues His-103 and His-113. The Proton donor role is filled by His-113. Residue 115-117 (NVR) participates in substrate binding. Residues His-152 and His-182 each contribute to the a divalent metal cation site. Positions 247 to 282 (YVEFNLVFDRGTLFGLQSGGRTESILLSMPPTAGWR) are important for dimerization. 265 to 267 (GGR) is a substrate binding site.

It belongs to the aerobic coproporphyrinogen-III oxidase family. In terms of assembly, homodimer. Requires a divalent metal cation as cofactor.

The protein resides in the cytoplasm. The catalysed reaction is coproporphyrinogen III + O2 + 2 H(+) = protoporphyrinogen IX + 2 CO2 + 2 H2O. The protein operates within porphyrin-containing compound metabolism; protoporphyrin-IX biosynthesis; protoporphyrinogen-IX from coproporphyrinogen-III (O2 route): step 1/1. Its function is as follows. Involved in the heme biosynthesis. Catalyzes the aerobic oxidative decarboxylation of propionate groups of rings A and B of coproporphyrinogen-III to yield the vinyl groups in protoporphyrinogen-IX. This Burkholderia mallei (strain SAVP1) protein is Oxygen-dependent coproporphyrinogen-III oxidase.